Here is a 323-residue protein sequence, read N- to C-terminus: Mycothiol acetyltransferase (323 aa).

N-acetyltransferase domains lie at L5 to R145 and V168 to R323. A 1D-myo-inositol 2-(L-cysteinylamino)-2-deoxy-alpha-D-glucopyranoside-binding site is contributed by E36. V83–V85 lines the acetyl-CoA pocket. Residues E195, K236, and E252 each contribute to the 1D-myo-inositol 2-(L-cysteinylamino)-2-deoxy-alpha-D-glucopyranoside site. Acetyl-CoA is bound by residues V256–V258 and Q263–R269. Y290 lines the 1D-myo-inositol 2-(L-cysteinylamino)-2-deoxy-alpha-D-glucopyranoside pocket. N295–Q300 lines the acetyl-CoA pocket.

The protein belongs to the acetyltransferase family. MshD subfamily. In terms of assembly, monomer.

The catalysed reaction is 1D-myo-inositol 2-(L-cysteinylamino)-2-deoxy-alpha-D-glucopyranoside + acetyl-CoA = mycothiol + CoA + H(+). Its function is as follows. Catalyzes the transfer of acetyl from acetyl-CoA to desacetylmycothiol (Cys-GlcN-Ins) to form mycothiol. In Thermobifida fusca (strain YX), this protein is Mycothiol acetyltransferase.